A 242-amino-acid chain; its full sequence is MSDEFSLADALPEQSSAKPPAVTNTKAGHSSQGWPGSSPWSNPSAPPAMPSGLPPSSAAPSTVPFGPVPTGMYPSMPPTGPPPGPPGPFPPPGPSCPPPGVPYPAPAVPGPGPTGPYATPNMPMPELPRPYGAPTDPAAAGSLGPWGPMSSGPWAPGIAGQHPNMPYRSPGPYPTVPPPVSGAPPVPWGTVPPGAWGPAAPYPGPAGSYPTPAPHPALNNPYQVPSGPAGAPPMPGGPHSYH.

Disordered regions lie at residues 1-145 (MSDE…SLGP) and 192-242 (PPGA…HSYH). At Ser-2 the chain carries N-acetylserine. A phosphoserine mark is found at Ser-2, Ser-6, and Ser-15. A compositionally biased stretch (polar residues) spans 13–29 (EQSSAKPPAVTNTKAGH). A compositionally biased stretch (low complexity) spans 30 to 43 (SSQGWPGSSPWSNP). Pro residues-rich tracts occupy residues 44–53 (SAPPAMPSGL) and 75–114 (SMPP…PGPT). Low complexity predominate over residues 192–210 (PPGAWGPAAPYPGPAGSYP).

Belongs to the MISS family.

The sequence is that of MAPK-interacting and spindle-stabilizing protein-like (Mapk1ip1l) from Mus musculus (Mouse).